The primary structure comprises 91 residues: Large ribosomal subunit protein bL27 (91 aa).

A disordered region spans residues 1-25; it reads MAHKKGAASSNNGRDSESKRLGVKR.

It belongs to the bacterial ribosomal protein bL27 family.

The chain is Large ribosomal subunit protein bL27 from Corynebacterium kroppenstedtii (strain DSM 44385 / JCM 11950 / CIP 105744 / CCUG 35717).